We begin with the raw amino-acid sequence, 421 residues long: 4-hydroxy-3-methylbut-2-en-1-yl diphosphate synthase (flavodoxin) (421 aa).

Positions 311, 314, 357, and 364 each coordinate [4Fe-4S] cluster.

Belongs to the IspG family. [4Fe-4S] cluster serves as cofactor.

The catalysed reaction is (2E)-4-hydroxy-3-methylbut-2-enyl diphosphate + oxidized [flavodoxin] + H2O + 2 H(+) = 2-C-methyl-D-erythritol 2,4-cyclic diphosphate + reduced [flavodoxin]. It participates in isoprenoid biosynthesis; isopentenyl diphosphate biosynthesis via DXP pathway; isopentenyl diphosphate from 1-deoxy-D-xylulose 5-phosphate: step 5/6. Converts 2C-methyl-D-erythritol 2,4-cyclodiphosphate (ME-2,4cPP) into 1-hydroxy-2-methyl-2-(E)-butenyl 4-diphosphate. The sequence is that of 4-hydroxy-3-methylbut-2-en-1-yl diphosphate synthase (flavodoxin) from Xanthomonas oryzae pv. oryzae (strain KACC10331 / KXO85).